The following is a 443-amino-acid chain: Transcriptional regulatory protein ZraR (443 aa).

The Response regulatory domain maps to 7–121 (DILVVDDDIS…KLQLTLSEAL (115 aa)). Residue D56 is modified to 4-aspartylphosphate. A Sigma-54 factor interaction domain is found at 141 to 370 (MVGDSPAMRA…LENAVERAVV (230 aa)). Positions 172, 173, 329, and 359 each coordinate ATP. A DNA-binding region (H-T-H motif) is located at residues 423-442 (KTEAARRLGITRKTLLAKLS).

Post-translationally, phosphorylated by ZraS.

The protein resides in the cytoplasm. With respect to regulation, activity of the ZraS/ZraR two-component system is repressed by the zinc-bound form of ZraP, which probably interacts with the periplasmic region of ZraS. In terms of biological role, part of the Zra signaling pathway, an envelope stress response (ESR) system composed of the periplasmic accessory protein ZraP, the histidine kinase ZraS and the transcriptional regulator ZraR. The ZraPSR system contributes to antibiotic resistance and is important for membrane integrity in the presence of membrane-targeting biocides. ZraR is a member of the two-component regulatory system ZraS/ZraR. When activated by ZraS, acts in conjunction with sigma-54 to regulate the expression of zraP in the presence of high Zn(2+) or Pb(2+) concentrations. Also positively autoregulates the expression of the zraSR operon. The protein is Transcriptional regulatory protein ZraR (zraR) of Klebsiella oxytoca.